The primary structure comprises 1103 residues: Activity-dependent neuroprotector homeobox protein (1103 aa).

Residues K39 and K72 each participate in a glycyl lysine isopeptide (Lys-Gly) (interchain with G-Cter in SUMO2) cross-link. Residues 74-97 form a C2H2-type 1; degenerate zinc finger; sequence FCCSACPFSSKFFSAYKSHFRNVH. The residue at position 98 (S98) is a Phosphoserine. The C2H2-type 2; degenerate zinc-finger motif lies at 107-129; the sequence is LNCPYCTFNADKKTLETHIKIFH. Residues 133–154 form a disordered region; sequence SSAPSSSLSTFKDKNKNDGLKP. Over residues 143-154 the composition is skewed to basic and acidic residues; that stretch reads FKDKNKNDGLKP. Residues K144 and K155 each participate in a glycyl lysine isopeptide (Lys-Gly) (interchain with G-Cter in SUMO2) cross-link. The segment at 165–188 adopts a C2H2-type 3; degenerate zinc-finger fold; the sequence is YYCKKCTYRDPLYEIVRKHIYREH. Glycyl lysine isopeptide (Lys-Gly) (interchain with G-Cter in SUMO2) cross-links involve residues K203, K231, K266, K274, K278, K279, K311, and K335. Residues 221–244 form a C2H2-type 4; degenerate zinc finger; sequence IHCKRCLFMPKSYEALVQHVIEDH. R348 is modified (asymmetric dimethylarginine). Residues 354–361 are neuroprotective peptide (NAP); it reads NAPVSIPQ. The interval 360–439 is disordered; it reads PQQSQSVKQL…PAATGPPPSN (80 aa). Residues K367 and K408 each participate in a glycyl lysine isopeptide (Lys-Gly) (interchain with G-Cter in SUMO2) cross-link. Residues 393–423 are compositionally biased toward polar residues; sequence SLQTANTSSLPPGQVKSPSVSQSQASRVLGQ. Residues S409 and S413 each carry the phosphoserine modification. A Glycyl lysine isopeptide (Lys-Gly) (interchain with G-Cter in SUMO2) cross-link involves residue K427. Residues 427–438 show a composition bias toward pro residues; it reads KPPPAATGPPPS. Residues 447 to 469 form a C2H2-type 5; atypical zinc finger; that stretch reads KICTICNELFPENVYSVHFEKEH. C2H2-type zinc fingers lie at residues 489–510 and 512–535; these read SKCL…MLIH and LSCP…RMVH. Glycyl lysine isopeptide (Lys-Gly) (interchain with G-Cter in SUMO2) cross-links involve residues K600 and K606. S608 bears the Phosphoserine mark. Glycyl lysine isopeptide (Lys-Gly) (interchain with G-Cter in SUMO2) cross-links involve residues K616, K621, K632, and K658. A C2H2-type 8; atypical zinc finger spans residues 622 to 647; sequence TLCPLCFSILKGPISDALAHHLRERH. A C2H2-type 9; atypical zinc finger spans residues 662–686; that stretch reads YKCIHCLGVYTSNMTASTITLHLVH. Residues 691 to 712 are disordered; it reads GKTQNGQDKTNAPSRLNQSPGL. The span at 692-710 shows a compositional bias: polar residues; that stretch reads KTQNGQDKTNAPSRLNQSP. Residue K699 forms a Glycyl lysine isopeptide (Lys-Gly) (interchain with G-Cter in SUMO2) linkage. S709 is modified (phosphoserine). Glycyl lysine isopeptide (Lys-Gly) (interchain with G-Cter in SUMO2) cross-links involve residues K716, K728, and K731. The residue at position 738 (S738) is a Phosphoserine. K745 participates in a covalent cross-link: Glycyl lysine isopeptide (Lys-Gly) (interchain with G-Cter in SUMO2). A DNA-binding region (homeobox) is located at residues 754–814; the sequence is LDPKGHEDDS…SNKRKKCVRD (61 aa). S805 is modified (phosphoserine). Residues K807, K829, and K835 each participate in a glycyl lysine isopeptide (Lys-Gly) (interchain with G-Cter in SUMO2) cross-link. The segment at 873-1029 is disordered; sequence DSFSDSFEHL…VQDDTEQLKW (157 aa). Phosphoserine occurs at positions 876, 878, 886, 889, and 905. Glycyl lysine isopeptide (Lys-Gly) (interchain with G-Cter in SUMO2) cross-links involve residues K914, K929, and K936. The segment covering 922–954 has biased composition (basic and acidic residues); sequence ESEKLDQKEEEDGSKYETIHLTEERAKLMHDAS. 2 positions are modified to phosphoserine: S954 and S956. The segment covering 972 to 982 has biased composition (polar residues); sequence PSESGPGSRQV. Residue K1017 forms a Glycyl lysine isopeptide (Lys-Gly) (interchain with G-Cter in SUMO2) linkage. K1036 and K1043 each carry N6-acetyllysine; alternate. Residues K1036 and K1043 each participate in a glycyl lysine isopeptide (Lys-Gly) (interchain with G-Cter in SUMO2); alternate cross-link. Positions 1045–1103 are disordered; it reads QSQWENASENAERLPNPQIEWQNSTIDSEDGEQFDSMTDGVADPMHGSLTGVKLSSQQA. Phosphoserine is present on S1072.

Interacts (via N-terminal region) with beta-catenin/CTNNB1 (via the central armadillo domains); interaction is direct and stabilizes CTNNB1 by modulating its phosphorylation by glycogen synthase kinase-3 beta GSK3B.

The protein resides in the nucleus. It localises to the chromosome. Functionally, may be involved in transcriptional regulation. May mediate some of the neuroprotective peptide VIP-associated effects involving normal growth and cancer proliferation. Positively modulates WNT-beta-catenin/CTNN1B signaling, acting by regulating phosphorylation of, and thereby stabilizing, CTNNB1. May be required for neural induction and neuronal differentiation. May be involved in erythroid differentiation. This Rattus norvegicus (Rat) protein is Activity-dependent neuroprotector homeobox protein (Adnp).